A 362-amino-acid polypeptide reads, in one-letter code: Phospho-N-acetylmuramoyl-pentapeptide-transferase (362 aa).

10 consecutive transmembrane segments (helical) span residues 18–38 (VFGYITLRTVLAALTALAISL), 73–93 (TMGGALILIAIGITILLWGDL), 97–117 (YVWVTLLVTLGFGAVGWVDDW), 134–154 (YFWTSAIALGASIFLGLSATT), 160–180 (LIVPFFKAVAYPLGVYGFIAL), 200–220 (GLAIMPTVMVAGALAIFAYVA), 237–257 (AGELAVFCGAICGAGLGFLWF), 264–284 (VFMGDVGALALGAALGTIAVV), 289–309 (IVLFIMGGLFVAETLSVMVQV), and 339–359 (QVVVRFWIITLMLVLFGLSTL).

It belongs to the glycosyltransferase 4 family. MraY subfamily. It depends on Mg(2+) as a cofactor.

It localises to the cell inner membrane. It catalyses the reaction UDP-N-acetyl-alpha-D-muramoyl-L-alanyl-gamma-D-glutamyl-meso-2,6-diaminopimeloyl-D-alanyl-D-alanine + di-trans,octa-cis-undecaprenyl phosphate = di-trans,octa-cis-undecaprenyl diphospho-N-acetyl-alpha-D-muramoyl-L-alanyl-D-glutamyl-meso-2,6-diaminopimeloyl-D-alanyl-D-alanine + UMP. Its pathway is cell wall biogenesis; peptidoglycan biosynthesis. Catalyzes the initial step of the lipid cycle reactions in the biosynthesis of the cell wall peptidoglycan: transfers peptidoglycan precursor phospho-MurNAc-pentapeptide from UDP-MurNAc-pentapeptide onto the lipid carrier undecaprenyl phosphate, yielding undecaprenyl-pyrophosphoryl-MurNAc-pentapeptide, known as lipid I. In Azoarcus sp. (strain BH72), this protein is Phospho-N-acetylmuramoyl-pentapeptide-transferase.